A 106-amino-acid polypeptide reads, in one-letter code: ATP-dependent Clp protease adapter protein ClpS (106 aa).

Positions 1 to 10 are enriched in basic and acidic residues; the sequence is MSQKTVHDQD. Residues 1–23 are disordered; sequence MSQKTVHDQDNALLLETGNTKVA.

The protein belongs to the ClpS family. Binds to the N-terminal domain of the chaperone ClpA.

Involved in the modulation of the specificity of the ClpAP-mediated ATP-dependent protein degradation. This Xylella fastidiosa (strain M23) protein is ATP-dependent Clp protease adapter protein ClpS.